The primary structure comprises 90 residues: Small ribosomal subunit protein bS16 (90 aa).

It belongs to the bacterial ribosomal protein bS16 family.

The protein is Small ribosomal subunit protein bS16 of Lactococcus lactis subsp. cremoris (strain MG1363).